We begin with the raw amino-acid sequence, 353 residues long: Photosystem II D2 protein (353 aa).

The residue at position 2 (Thr-2) is an N-acetylthreonine. Thr-2 is subject to Phosphothreonine. A helical membrane pass occupies residues 41–61 (CAYFSLGGWLTGTTFVTSWYT). His-118 contributes to the chlorophyll a binding site. The chain crosses the membrane as a helical span at residues 125-141 (GFMLRQFELARSVQLRP). Residues Gln-130 and Asn-143 each contribute to the pheophytin a site. The chain crosses the membrane as a helical span at residues 153–166 (VFVSVFLIYPLGQS). A chlorophyll a-binding site is contributed by His-198. Residues 208-228 (AALLCAIHGATVENTLFEDGD) form a helical membrane-spanning segment. Positions 215 and 262 each coordinate a plastoquinone. His-215 contacts Fe cation. His-269 contributes to the Fe cation binding site. A helical membrane pass occupies residues 279 to 295 (GLWMSAIGVVGLALNLR).

It belongs to the reaction center PufL/M/PsbA/D family. In terms of assembly, PSII is composed of 1 copy each of membrane proteins PsbA, PsbB, PsbC, PsbD, PsbE, PsbF, PsbH, PsbI, PsbJ, PsbK, PsbL, PsbM, PsbT, PsbX, PsbY, PsbZ, Psb30/Ycf12, at least 3 peripheral proteins of the oxygen-evolving complex and a large number of cofactors. It forms dimeric complexes. Requires The D1/D2 heterodimer binds P680, chlorophylls that are the primary electron donor of PSII, and subsequent electron acceptors. It shares a non-heme iron and each subunit binds pheophytin, quinone, additional chlorophylls, carotenoids and lipids. There is also a Cl(-1) ion associated with D1 and D2, which is required for oxygen evolution. The PSII complex binds additional chlorophylls, carotenoids and specific lipids. as cofactor.

It is found in the plastid. Its subcellular location is the chloroplast thylakoid membrane. It carries out the reaction 2 a plastoquinone + 4 hnu + 2 H2O = 2 a plastoquinol + O2. Photosystem II (PSII) is a light-driven water:plastoquinone oxidoreductase that uses light energy to abstract electrons from H(2)O, generating O(2) and a proton gradient subsequently used for ATP formation. It consists of a core antenna complex that captures photons, and an electron transfer chain that converts photonic excitation into a charge separation. The D1/D2 (PsbA/PsbD) reaction center heterodimer binds P680, the primary electron donor of PSII as well as several subsequent electron acceptors. D2 is needed for assembly of a stable PSII complex. The protein is Photosystem II D2 protein of Chara vulgaris (Common stonewort).